We begin with the raw amino-acid sequence, 279 residues long: Diaminopimelate epimerase 1 (279 aa).

Asn13 and Asn66 together coordinate substrate. The Proton donor role is filled by Cys75. Residues 76-77, Asn164, Asn197, and 215-216 contribute to the substrate site; these read GN and ER. Residue Cys224 is the Proton acceptor of the active site. 225–226 serves as a coordination point for substrate; sequence GT.

The protein belongs to the diaminopimelate epimerase family. Homodimer.

It localises to the cytoplasm. It catalyses the reaction (2S,6S)-2,6-diaminopimelate = meso-2,6-diaminopimelate. The protein operates within amino-acid biosynthesis; L-lysine biosynthesis via DAP pathway; DL-2,6-diaminopimelate from LL-2,6-diaminopimelate: step 1/1. Its function is as follows. Catalyzes the stereoinversion of LL-2,6-diaminopimelate (L,L-DAP) to meso-diaminopimelate (meso-DAP), a precursor of L-lysine and an essential component of the bacterial peptidoglycan. The polypeptide is Diaminopimelate epimerase 1 (Nostoc sp. (strain PCC 7120 / SAG 25.82 / UTEX 2576)).